We begin with the raw amino-acid sequence, 595 residues long: Acriflavine sensitivity control protein acr-2 (595 aa).

A DNA-binding region (zn(2)-C6 fungal-type) is located at residues 22-49 (CYNCHRKRLRCDKSLPACLKCSINGEEC). The segment covering 69 to 88 (TTRTTNKTNFNGTNTTTPRT) has biased composition (low complexity). The segment at 69 to 172 (TTRTTNKTNF…PDDNPDPSSQ (104 aa)) is disordered. A compositionally biased stretch (polar residues) spans 89–117 (VKSSTPTQAPTPSDSPRQLDTDVTSSSAP). Over residues 118–138 (SHTCSRSTTTSTTTTRISSPT) the composition is skewed to low complexity.

It is found in the nucleus. In terms of biological role, probable transcriptional regulator. This is Acriflavine sensitivity control protein acr-2 (acr-2) from Neurospora crassa (strain ATCC 24698 / 74-OR23-1A / CBS 708.71 / DSM 1257 / FGSC 987).